The chain runs to 238 residues: Succinate dehydrogenase assembly factor 2, mitochondrial (238 aa).

Residues 47–82 are disordered; it reads GLKADGSRADQAEAGASQSLDKQSRTLDSVRDDTLS. Basic and acidic residues predominate over residues 68 to 80; the sequence is KQSRTLDSVRDDT.

This sequence belongs to the SDHAF2 family. As to quaternary structure, interacts with the flavoprotein subunit within the SDH catalytic dimer.

Its subcellular location is the mitochondrion matrix. Its function is as follows. Plays an essential role in the assembly of succinate dehydrogenase (SDH), an enzyme complex (also referred to as respiratory complex II) that is a component of both the tricarboxylic acid (TCA) cycle and the mitochondrial electron transport chain, and which couples the oxidation of succinate to fumarate with the reduction of ubiquinone (coenzyme Q) to ubiquinol. Required for flavinylation (covalent attachment of FAD) of the flavoprotein subunit of the SDH catalytic dimer. The chain is Succinate dehydrogenase assembly factor 2, mitochondrial from Mycosarcoma maydis (Corn smut fungus).